The primary structure comprises 436 residues: GTPase Der (436 aa).

EngA-type G domains are found at residues 4-167 (PTVA…PVEE) and 175-351 (IRFS…ESQN). GTP contacts are provided by residues 10 to 17 (GRPNVGKS), 57 to 61 (DTGGI), 119 to 122 (NKVD), 181 to 188 (GRPNVGKS), 229 to 233 (DTAGM), and 294 to 297 (NKWD). Residues 352 to 436 (KRIPSAVLND…PIHLIARKRK (85 aa)) enclose the KH-like domain.

The protein belongs to the TRAFAC class TrmE-Era-EngA-EngB-Septin-like GTPase superfamily. EngA (Der) GTPase family. Associates with the 50S ribosomal subunit.

Functionally, GTPase that plays an essential role in the late steps of ribosome biogenesis. The sequence is that of GTPase Der from Streptococcus pyogenes serotype M1.